A 77-amino-acid polypeptide reads, in one-letter code: Large ribosomal subunit protein bL31 (77 aa).

Belongs to the bacterial ribosomal protein bL31 family. Type A subfamily. As to quaternary structure, part of the 50S ribosomal subunit.

Its function is as follows. Binds the 23S rRNA. This is Large ribosomal subunit protein bL31 from Synechococcus elongatus (strain ATCC 33912 / PCC 7942 / FACHB-805) (Anacystis nidulans R2).